The sequence spans 714 residues: Fatty acid oxidation complex subunit alpha (714 aa).

The segment at 1–190 (MEMTSAFTLN…KLGLVDDVVP (190 aa)) is enoyl-CoA hydratase. The segment at 306–714 (APLNSVGILG…FWKTTATDLQ (409 aa)) is 3-hydroxyacyl-CoA dehydrogenase.

In the N-terminal section; belongs to the enoyl-CoA hydratase/isomerase family. This sequence in the central section; belongs to the 3-hydroxyacyl-CoA dehydrogenase family. In terms of assembly, heterotetramer of two alpha chains (FadJ) and two beta chains (FadI).

Its subcellular location is the cytoplasm. It carries out the reaction a (3S)-3-hydroxyacyl-CoA = a (2E)-enoyl-CoA + H2O. It catalyses the reaction a 4-saturated-(3S)-3-hydroxyacyl-CoA = a (3E)-enoyl-CoA + H2O. The catalysed reaction is a (3S)-3-hydroxyacyl-CoA + NAD(+) = a 3-oxoacyl-CoA + NADH + H(+). The enzyme catalyses (3S)-3-hydroxybutanoyl-CoA = (3R)-3-hydroxybutanoyl-CoA. The protein operates within lipid metabolism; fatty acid beta-oxidation. Catalyzes the formation of a hydroxyacyl-CoA by addition of water on enoyl-CoA. Also exhibits 3-hydroxyacyl-CoA epimerase and 3-hydroxyacyl-CoA dehydrogenase activities. The chain is Fatty acid oxidation complex subunit alpha from Escherichia coli (strain 55989 / EAEC).